We begin with the raw amino-acid sequence, 969 residues long: Protein translocase subunit SecA (969 aa).

ATP-binding positions include Q99, 117 to 121, and D631; that span reads GEGKT.

Belongs to the SecA family. Monomer and homodimer. Part of the essential Sec protein translocation apparatus which comprises SecA, SecYEG and auxiliary proteins SecDF. Other proteins may also be involved.

It is found in the cell inner membrane. Its subcellular location is the cytoplasm. The catalysed reaction is ATP + H2O + cellular proteinSide 1 = ADP + phosphate + cellular proteinSide 2.. Its function is as follows. Part of the Sec protein translocase complex. Interacts with the SecYEG preprotein conducting channel. Has a central role in coupling the hydrolysis of ATP to the transfer of proteins into and across the cell membrane, serving as an ATP-driven molecular motor driving the stepwise translocation of polypeptide chains across the membrane. This chain is Protein translocase subunit SecA, found in Chlamydia trachomatis serovar L2 (strain ATCC VR-902B / DSM 19102 / 434/Bu).